Reading from the N-terminus, the 690-residue chain is Eukaryotic translation initiation factor 3 subunit B (690 aa).

A compositionally biased stretch (basic and acidic residues) spans 1 to 11 (MAKKKSEEHSG). The segment at 1-36 (MAKKKSEEHSGADANDSDYQEEPNFEDPPGFVDNIS) is disordered. The span at 15–25 (NDSDYQEEPNF) shows a compositional bias: acidic residues. One can recognise an RRM domain in the interval 57-141 (SVVVVDNIPK…HTFAVNLFTD (85 aa)). WD repeat units lie at residues 207 to 246 (TRER…KIQK), 293 to 331 (DGMS…LLDL), 334 to 369 (IKIP…TLME), 442 to 484 (EIRE…KPSL), and 530 to 575 (PDHF…IKRT). A coiled-coil region spans residues 595-645 (EEKQKEIKKNLKKYYAAFEQKDRLRLTRASKELLEKRSQLRETFMEYRNKR).

It belongs to the eIF-3 subunit B family. As to quaternary structure, component of the eukaryotic translation initiation factor 3 (eIF-3) complex. The eIF-3 complex interacts with pix. Interacts with mxt.

It localises to the cytoplasm. RNA-binding component of the eukaryotic translation initiation factor 3 (eIF-3) complex, which is involved in protein synthesis of a specialized repertoire of mRNAs and, together with other initiation factors, stimulates binding of mRNA and methionyl-tRNAi to the 40S ribosome. The eIF-3 complex specifically targets and initiates translation of a subset of mRNAs involved in cell proliferation. This chain is Eukaryotic translation initiation factor 3 subunit B, found in Drosophila erecta (Fruit fly).